A 412-amino-acid chain; its full sequence is MYVTGNLAGNTIAMVLAGGKGERLAPLTLRRPKPGVAFGGKYKIIDFVLSNMFNSGIKKVYILTQYRAYSLMKHIRESWGKWAGLGEFFVAISPETSSESEEWFKGTADAINHYLRFIESSDADYVAIFGGDHIYRMDVSQMIGYHRRNRADITIAALEVPVEEARRFGVFCVDDDNRVTAFEEKPANPVTIPGRETCFASMGNYIFSTRRLIEVLQEGKKLHADLDFGKHVIPMMLAKKDRVFAYNFNDNLIPGMKPEERGYWKDVGTIDSYYEANMELIHVSPQLNLYNYKWPILTNQGNYPPAKTVFDEDGRRGMNIDSYVCAGCITSGSVVRRSIVGPLTKVNSYSLVEDSILFENVNVGRNVKIRRAIIDKNITIPDGTTIGYDHGEDRRRGYTVTESGIVVVSPAE.

Alpha-D-glucose 1-phosphate contacts are provided by residues Gly-169, 184 to 185, and Ser-201; that span reads EK.

The protein belongs to the bacterial/plant glucose-1-phosphate adenylyltransferase family. Homotetramer.

The enzyme catalyses alpha-D-glucose 1-phosphate + ATP + H(+) = ADP-alpha-D-glucose + diphosphate. It participates in glycan biosynthesis; glycogen biosynthesis. Its function is as follows. Involved in the biosynthesis of ADP-glucose, a building block required for the elongation reactions to produce glycogen. Catalyzes the reaction between ATP and alpha-D-glucose 1-phosphate (G1P) to produce pyrophosphate and ADP-Glc. In Geobacter metallireducens (strain ATCC 53774 / DSM 7210 / GS-15), this protein is Glucose-1-phosphate adenylyltransferase.